A 335-amino-acid chain; its full sequence is Olfactory receptor 9K2 (335 aa).

The Extracellular segment spans residues 1 to 50 (MLGSKPRVHLYILPCASQQVSTMGDRGTSNHSEMTDFILAGFRVRPELHI). An N-linked (GlcNAc...) asparagine glycan is attached at Asn-30. The helical transmembrane segment at 51 to 71 (LLFLLFLFVYAMILLGNVGMM) threads the bilayer. Residues 72–79 (TIIMTDPR) are Cytoplasmic-facing. A helical membrane pass occupies residues 80-100 (LNTPMYFFLGNLSFIDLFYSS). Residues 101–124 (VIEPKAMINFWSENKSISFAGCVA) are Extracellular-facing. Asn-114 carries N-linked (GlcNAc...) asparagine glycosylation. Cysteines 122 and 214 form a disulfide. A helical transmembrane segment spans residues 125 to 145 (QLFLFALLIVTEGFLLAAMAY). The Cytoplasmic segment spans residues 146-164 (DRFIAICNPLLYSVQMSTR). Residues 165 to 185 (LCTQLVAGSYFCGCISSVIQT) form a helical membrane-spanning segment. Topologically, residues 186–222 (SMTFTLSFCASRAVDHFYCDSRPLQRLSCSDLFIHRM) are extracellular. The helical transmembrane segment at 223-242 (ISFSLSCIIILPTIIVIIVS) threads the bilayer. The Cytoplasmic portion of the chain corresponds to 243–262 (YMYIVSTVLKIHSTEGHKKA). Residues 263–283 (FSTCSSHLGVVSVLYGAVFFM) form a helical membrane-spanning segment. The Extracellular portion of the chain corresponds to 284–296 (YLTPDRFPELSKV). The Cytoplasmic portion of the chain corresponds to 316–335 (RNKDVQEALKKFLEKKNIIL).

Belongs to the G-protein coupled receptor 1 family.

The protein resides in the cell membrane. Functionally, odorant receptor. This Homo sapiens (Human) protein is Olfactory receptor 9K2 (OR9K2).